The following is a 189-amino-acid chain: uncharacterized protein (189 aa).

5 consecutive transmembrane segments (helical) span residues 4 to 21 (AISTVLYVLIPFLVFLFR), 34 to 56 (AFYPFHLFLPMIVVFITGIPLIL), 79 to 101 (LLVIDTMLFQIMLLQPFITLIYS), 122 to 144 (RILSSLFAFVIAGIALPEIVLLN), and 148 to 170 (ILHVDYLFFVHLIASSVFANLLV).

It is found in the cell membrane. This is an uncharacterized protein from Archaeoglobus fulgidus (strain ATCC 49558 / DSM 4304 / JCM 9628 / NBRC 100126 / VC-16).